The following is a 1097-amino-acid chain: RE1-silencing transcription factor (1097 aa).

Positions 32-122 (DLHDLSKAEL…SLELSVVEPQ (91 aa)) are interaction with SIN3A. Residues 43–57 (APQLIMLANVALTGE) form an interaction with SIN3B region. Disordered stretches follow at residues 83-103 (NFSD…KGEP) and 127-159 (ASGA…TKPF). Positions 86 to 96 (DSEEGEGLEES) are enriched in acidic residues. Positions 145 to 418 (PGAEDKGKSS…KSKHPTCPNK (274 aa)) are interaction with ZFP90. The C2H2-type 1 zinc-finger motif lies at 159–181 (FRCKPCQYEAESEEQFVHHIRVH). Residues 201–212 (SGSSTAEEGDFS) form a required for binding to the neuron-restrictive silencer element region. 7 C2H2-type zinc fingers span residues 216–238 (IRCD…LKHH), 248–270 (YKCI…LRNH), 276–298 (YTCG…VRTH), 304–326 (YKCE…MRTH), 332–355 (FKCD…RQVH), 361–383 (LNCP…VELH), and 389–412 (FNCP…KSKH). A compositionally biased stretch (basic and acidic residues) spans 452–479 (KIKGDVAGKKNEKSVKAEKRDVSKEKKP). Disordered regions lie at residues 452–642 (KIKG…MEGA), 774–837 (KEPV…EQVL), 853–938 (ESVS…NGKH), and 961–1049 (GINS…NAKE). Residues 480–490 (SNNVSVIQVTT) are compositionally biased toward polar residues. 2 stretches are compositionally biased toward basic and acidic residues: residues 495–504 (SVTEVKEMDV) and 559–570 (PKGDSKVEENKK). Positions 577–593 (KSTKKKTLKNKSSKKSS) are enriched in basic residues. The span at 803–836 (PPLHMEPISKKPPLRKDKKEKSNMQSERARKEQV) shows a compositional bias: basic and acidic residues. Serine 864 is modified (phosphoserine). The segment covering 913–930 (INESTHISSSGQNLNTPE) has biased composition (polar residues). Position 971 is a phosphoserine (serine 971). Residues 1009–1087 (EGIHSHEGSD…HLNRHLVNVY (79 aa)) form an interaction with RCOR1 region. The C2H2-type 9 zinc-finger motif lies at 1060 to 1082 (FVCIFCDRSFRKGKDYSKHLNRH).

Isoform 1 and isoform 3 form heterodimers. Isoform 3: Forms homodimers and homooligomers; binds to the neuron-restrictive silencer element (NRSE) as monomer. Interacts with SIN3A, SIN3B and RCOR1. Interacts with CDYL. Interacts with EHMT1 and EHMT2 only in the presence of CDYL. Part of a complex containing at least CDYL, REST, WIZ, SETB1, EHMT1 and EHMT2. Interacts (via zinc-finger DNA-binding domain) with ZFP90 (via N- and C-termini); the interaction inhibits REST repressor activity. Interacts (via C2H2-type zinc finger 5) with PRICKLE1. Interacts with FBXW11 and BTRC. Interacts with USP7. Post-translationally, O-glycosylated. Phosphorylated; phosphorylation is required for ubiquitination. In terms of processing, ubiquitinated; ubiquitination is mediated by BTRC and leads to proteasomal degradation in G2 phase. Ubiquitination increases during neuronal differentiation. Deubiquitinated by USP7; leading to its stabilization and promoting the maintenance of neural progenitor cells. As to expression, expressed in neurons of the prefrontal cortex, in hippocampal pyramidal neurons, dentate gyrus granule neurons and cerebellar Purkinje and granule neurons (at protein level). Expressed in dopaminergic neurons of the substantia nigra (at protein level). Expressed in neural progenitor cells (at protein level). In patients suffering from Alzheimer disease, frontotemporal dementia or dementia with Lewy bodies, decreased nuclear levels have been observed in neurons of the prefrontal cortex and the hippocampus, but not in neurons of the dentate gyrus and cerebellum (at protein level). In patients with Parkinson disease or dementia with Lewy bodies, decreased nuclear levels have been observed in dopaminergic neurons and in cortical neurons and localization to Lewy bodies and pale bodies was detected (at protein level). Expressed at higher levels in weakly invasive breast cancer cell lines and at lower levels in highly invasive breast cancer lines (at protein level). Ubiquitous. Expressed at higher levels in the tissues of the lymphocytic compartment, including spleen, thymus, peripheral blood lymphocytes and ovary.

The protein localises to the nucleus. The protein resides in the cytoplasm. Transcriptional repressor which binds neuron-restrictive silencer element (NRSE) and represses neuronal gene transcription in non-neuronal cells. Restricts the expression of neuronal genes by associating with two distinct corepressors, SIN3A and RCOR1, which in turn recruit histone deacetylase to the promoters of REST-regulated genes. Mediates repression by recruiting the BHC complex at RE1/NRSE sites which acts by deacetylating and demethylating specific sites on histones, thereby acting as a chromatin modifier. Transcriptional repression by REST-CDYL via the recruitment of histone methyltransferase EHMT2 may be important in transformation suppression. Represses the expression of SRRM4 in non-neural cells to prevent the activation of neural-specific splicing events and to prevent production of REST isoform 3. Repressor activity may be inhibited by forming heterodimers with isoform 3, thereby preventing binding to NRSE or binding to corepressors and leading to derepression of target genes. Also maintains repression of neuronal genes in neural stem cells, and allows transcription and differentiation into neurons by dissociation from RE1/NRSE sites of target genes. Thereby is involved in maintaining the quiescent state of adult neural stem cells and preventing premature differentiation into mature neurons. Plays a role in the developmental switch in synaptic NMDA receptor composition during postnatal development, by repressing GRIN2B expression and thereby altering NMDA receptor properties from containing primarily GRIN2B to primarily GRIN2A subunits. Acts as a regulator of osteoblast differentiation. Key repressor of gene expression in hypoxia; represses genes in hypoxia by direct binding to an RE1/NRSE site on their promoter regions. May also function in stress resistance in the brain during aging; possibly by regulating expression of genes involved in cell death and in the stress response. Repressor of gene expression in the hippocampus after ischemia by directly binding to RE1/NRSE sites and recruiting SIN3A and RCOR1 to promoters of target genes, thereby promoting changes in chromatin modifications and ischemia-induced cell death. After ischemia, might play a role in repression of miR-132 expression in hippocampal neurons, thereby leading to neuronal cell death. Negatively regulates the expression of SRRM3 in breast cancer cell lines. In terms of biological role, binds to the 3' region of the neuron-restrictive silencer element (NRSE), with lower affinity than full-length REST isoform 1. Exhibits weaker repressor activity compared to isoform 1. May negatively regulate the repressor activity of isoform 1 by binding to isoform 1, thereby preventing its binding to NRSE and leading to derepression of target genes. However, in another study, does not appear to be implicated in repressor activity of a NRSE motif-containing reporter construct nor in inhibitory activity on the isoform 1 transcriptional repressor activity. Post-transcriptional inactivation of REST by SRRM4-dependent alternative splicing into isoform 3 is required in mechanosensory hair cells in the inner ear for derepression of neuronal genes and hearing. This chain is RE1-silencing transcription factor (REST), found in Homo sapiens (Human).